We begin with the raw amino-acid sequence, 619 residues long: DNA mismatch repair protein MutL (619 aa).

Basic and acidic residues predominate over residues 368–378; the sequence is VDEPKQVDEPK. The interval 368–403 is disordered; that stretch reads VDEPKQVDEPKQSSPVQEPKEEIPSFLPTVESKQND.

The protein belongs to the DNA mismatch repair MutL/HexB family.

In terms of biological role, this protein is involved in the repair of mismatches in DNA. It is required for dam-dependent methyl-directed DNA mismatch repair. May act as a 'molecular matchmaker', a protein that promotes the formation of a stable complex between two or more DNA-binding proteins in an ATP-dependent manner without itself being part of a final effector complex. This is DNA mismatch repair protein MutL from Geobacillus sp. (strain WCH70).